The chain runs to 397 residues: Carnitine transport ATP-binding protein OpuCA (397 aa).

Positions 2 to 236 (LKFEHVTKTY…PANSFVEDFI (235 aa)) constitute an ABC transporter domain. 35–42 (GPSGCGKT) contributes to the ATP binding site. CBS domains lie at 255 to 311 (MNTN…ATSV) and 315 to 373 (IEKN…WGTL). Residues 377–397 (TENQEEQADSKTTEPEMKQEG) form a disordered region. A compositionally biased stretch (basic and acidic residues) spans 384-397 (ADSKTTEPEMKQEG).

The protein belongs to the ABC transporter superfamily. As to quaternary structure, the complex is composed of two ATP-binding proteins (OpuCA), two transmembrane proteins (OpuCB and OpuCD) and a solute-binding protein (OpuCC).

It carries out the reaction a quaternary ammonium(out) + ATP + H2O = a quaternary ammonium(in) + ADP + phosphate + H(+). Part of the ABC transporter complex OpuCABCD involved in carnitine uptake. Probably responsible for energy coupling to the transport system. Involved, with BetL and GbuABC, in osmoprotection and cryoprotection of Listeria. Can also mediate weak glycine betaine transport. The chain is Carnitine transport ATP-binding protein OpuCA (opuCA) from Listeria monocytogenes serotype 1/2a (strain 10403S).